A 414-amino-acid chain; its full sequence is Gamma-glutamyl phosphate reductase (414 aa).

The protein belongs to the gamma-glutamyl phosphate reductase family.

The protein localises to the cytoplasm. The enzyme catalyses L-glutamate 5-semialdehyde + phosphate + NADP(+) = L-glutamyl 5-phosphate + NADPH + H(+). It participates in amino-acid biosynthesis; L-proline biosynthesis; L-glutamate 5-semialdehyde from L-glutamate: step 2/2. Catalyzes the NADPH-dependent reduction of L-glutamate 5-phosphate into L-glutamate 5-semialdehyde and phosphate. The product spontaneously undergoes cyclization to form 1-pyrroline-5-carboxylate. The chain is Gamma-glutamyl phosphate reductase from Clostridium beijerinckii (strain ATCC 51743 / NCIMB 8052) (Clostridium acetobutylicum).